Here is a 464-residue protein sequence, read N- to C-terminus: Alpha-1,6-mannosyl-glycoprotein 4-beta-N-acetylglucosaminyltransferase (464 aa).

Residues 1–10 (MRCSPKRSLT) are Cytoplasmic-facing. The helical; Signal-anchor for type II membrane protein transmembrane segment at 11–31 (AVIAASFLLLLLLLLLHRGSW) threads the bilayer. At 32–464 (QDPQEVQFRD…QSIGIWTAGT (433 aa)) the chain is on the lumenal side. 2 N-linked (GlcNAc...) asparagine glycosylation sites follow: Asn-70 and Asn-201.

The protein belongs to the glycosyltransferase 54 family. A divalent metal cation serves as cofactor. In terms of tissue distribution, highly expressed in oviduct, spleen, lung and colon.

Its subcellular location is the golgi apparatus membrane. It catalyses the reaction N(4)-{beta-D-GlcNAc-(1-&gt;2)-[beta-D-GlcNAc-(1-&gt;4)]-alpha-D-Man-(1-&gt;3)-[beta-D-GlcNAc-(1-&gt;2)-[beta-D-GlcNAc-(1-&gt;6)]-alpha-D-Man-(1-&gt;6)]-beta-D-Man-(1-&gt;4)-beta-D-GlcNAc-(1-&gt;4)-beta-D-GlcNAc}-L-asparaginyl-[protein] + UDP-N-acetyl-alpha-D-glucosamine = N(4)-{beta-D-GlcNAc-(1-&gt;2)-[beta-D-GlcNAc-(1-&gt;4)]-alpha-D-Man-(1-&gt;3)-[beta-D-GlcNAc-(1-&gt;2)-[beta-D-GlcNAc-(1-&gt;4)]-[beta-D-GlcNAc-(1-&gt;6)]-alpha-D-Man-(1-&gt;6)]-beta-D-Man-(1-&gt;4)-beta-D-GlcNAc-(1-&gt;4)-beta-D-GlcNAc}-L-asparaginyl-[protein] + UDP + H(+). It functions in the pathway protein modification; protein glycosylation. In terms of biological role, glycosyltransferase that catalyzes the transfer of GlcNAc to the Manalpha1-6 arm to form GlcNAcBeta1-4Manalpha1-6 linkage (also named 'GnT-VI' activity). May also participate in the transfer of N-acetylglucosamine (GlcNAc) to the core mannose residues of N-linked glycans by catalyzing the formation of the GlcNAcbeta1-4 branch on the GlcNAcbeta1-2Manalpha1-3 arm of the core structure of N-linked glycans. The chain is Alpha-1,6-mannosyl-glycoprotein 4-beta-N-acetylglucosaminyltransferase (MGAT4C) from Gallus gallus (Chicken).